A 2222-amino-acid chain; its full sequence is DNA polymerase epsilon catalytic subunit A (2222 aa).

Residues 90–110 are disordered; that stretch reads ETLSSGSNGGGNSNDGERVTT. 4 residues coordinate Zn(2+): C2108, C2111, C2130, and C2133. The CysA-type zinc-finger motif lies at 2108–2133; it reads CEYCFFISDIDFCKAAPESIFSCVRC. Residues C2164, C2167, C2179, and C2181 each contribute to the [4Fe-4S] cluster site. The short motif at 2164–2181 is the CysB motif element; the sequence is CSRCHKVKRDYMSAHCPC.

Belongs to the DNA polymerase type-B family. In terms of assembly, DNA polymerase epsilon is a heterotetramer consisting of POL2, DPB2, DPB3 and DPB4. Requires [4Fe-4S] cluster as cofactor.

The protein resides in the nucleus. It catalyses the reaction DNA(n) + a 2'-deoxyribonucleoside 5'-triphosphate = DNA(n+1) + diphosphate. Its function is as follows. Catalytic component of the DNA polymerase epsilon complex which participates in chromosomal DNA replication. Required during synthesis of the leading DNA strands at the replication fork, binds at/or near replication origins and moves along DNA with the replication fork. Has 3'-5' proofreading exonuclease activity that corrects errors arising during DNA replication. In Saccharomyces cerevisiae (strain ATCC 204508 / S288c) (Baker's yeast), this protein is DNA polymerase epsilon catalytic subunit A (POL2).